Here is a 640-residue protein sequence, read N- to C-terminus: 1-deoxy-D-xylulose-5-phosphate synthase (640 aa).

Residues His-79 and 120–122 (GHS) each bind thiamine diphosphate. Asp-151 provides a ligand contact to Mg(2+). Residues 152 to 153 (GS), Asn-180, Tyr-290, and Glu-372 contribute to the thiamine diphosphate site. Asn-180 is a Mg(2+) binding site.

It belongs to the transketolase family. DXPS subfamily. In terms of assembly, homodimer. Mg(2+) serves as cofactor. The cofactor is thiamine diphosphate.

It carries out the reaction D-glyceraldehyde 3-phosphate + pyruvate + H(+) = 1-deoxy-D-xylulose 5-phosphate + CO2. It functions in the pathway metabolic intermediate biosynthesis; 1-deoxy-D-xylulose 5-phosphate biosynthesis; 1-deoxy-D-xylulose 5-phosphate from D-glyceraldehyde 3-phosphate and pyruvate: step 1/1. Functionally, catalyzes the acyloin condensation reaction between C atoms 2 and 3 of pyruvate and glyceraldehyde 3-phosphate to yield 1-deoxy-D-xylulose-5-phosphate (DXP). The protein is 1-deoxy-D-xylulose-5-phosphate synthase of Rhodopseudomonas palustris (strain BisA53).